The following is a 379-amino-acid chain: Putative beta-glucosidase 6 (379 aa).

A signal peptide spans methionine 1–cysteine 20. A beta-D-glucoside is bound by residues glutamine 43, histidine 141, and asparagine 186–glutamate 187. Residue glutamate 187 is the Proton donor of the active site. Cysteine 206 and cysteine 213 are disulfide-bonded. Asparagine 217 is a glycosylation site (N-linked (GlcNAc...) asparagine). Tyrosine 329 serves as a coordination point for a beta-D-glucoside. N-linked (GlcNAc...) asparagine glycosylation is present at asparagine 362.

This sequence belongs to the glycosyl hydrolase 1 family.

It catalyses the reaction Hydrolysis of terminal, non-reducing beta-D-glucosyl residues with release of beta-D-glucose.. This Arabidopsis thaliana (Mouse-ear cress) protein is Putative beta-glucosidase 6.